The chain runs to 208 residues: Adapter protein MecA (208 aa).

The protein belongs to the MecA family. In terms of assembly, homodimer.

Enables the recognition and targeting of unfolded and aggregated proteins to the ClpC protease or to other proteins involved in proteolysis. The sequence is that of Adapter protein MecA from Exiguobacterium sibiricum (strain DSM 17290 / CCUG 55495 / CIP 109462 / JCM 13490 / 255-15).